The following is a 360-amino-acid chain: Neutral protease 2 homolog SS1G_13741 (360 aa).

Residue Asn129 is glycosylated (N-linked (GlcNAc...) asparagine). 2 cysteine pairs are disulfide-bonded: Cys189-Cys261 and Cys268-Cys286. His311 is a binding site for Zn(2+). Glu312 is an active-site residue. Residues His315 and Asp326 each coordinate Zn(2+).

The protein belongs to the peptidase M35 family. It depends on Zn(2+) as a cofactor.

It localises to the secreted. The enzyme catalyses Preferential cleavage of bonds with hydrophobic residues in P1'. Also 3-Asn-|-Gln-4 and 8-Gly-|-Ser-9 bonds in insulin B chain.. In terms of biological role, secreted metalloproteinase that allows assimilation of proteinaceous substrates. Shows high activities on basic nuclear substrates such as histone and protamine. The protein is Neutral protease 2 homolog SS1G_13741 of Sclerotinia sclerotiorum (strain ATCC 18683 / 1980 / Ss-1) (White mold).